The sequence spans 256 residues: MSRESAGAAIRALRESRDWSLADLAAATGVSTMGLSYLERGARKPHKSTVQKVENGLGLPPGTYSRLLVAADPDAELARLIAAQPSNPTAVRRAGAVVVDRHSDTDVLEGYAEAQLDAIKSVIDRLPATTSNEYETYILSVIAQCVKAEMLAASSWRVAVNAGADSTGRLMEHLRALEATRGALLERMPTSLSARFDRACAQSSLPEAVVAALIGVGADEMWDIRNRGVIPAGALPRVRAFVDAIEASHDADEGQQ.

One can recognise an HTH cro/C1-type domain in the interval 10 to 64 (IRALRESRDWSLADLAAATGVSTMGLSYLERGARKPHKSTVQKVENGLGLPPGTY). Positions 21 to 40 (LADLAAATGVSTMGLSYLER) form a DNA-binding region, H-T-H motif.

This is an uncharacterized protein from Mycobacterium bovis (strain ATCC BAA-935 / AF2122/97).